The following is a 246-amino-acid chain: MAVTMRQMLEAGVHFGHQTRFWNPKMAPFIFGHRNKIHIINLEKTLPMFTDAQKYVRQLAANRGTILFVGTKRQSRDTIAQEAQRAGMPYVNARWLGGMMTNFKTLKVSIKRLKDMEAAVEAGETEKMSKKEALLFEREIAKLQKSIGGVKDMGGIPDAIFVIDVGYHKIAVTEANKLGVPVIAVVDTNHSPEGVDYVIPGNDDSSKAVALYAQGVADAILEGRANAVNEVVQAVRGDDEYVEENA.

The protein belongs to the universal ribosomal protein uS2 family.

The protein is Small ribosomal subunit protein uS2 of Burkholderia vietnamiensis (strain G4 / LMG 22486) (Burkholderia cepacia (strain R1808)).